A 626-amino-acid polypeptide reads, in one-letter code: (+)-3-carene synthase 1, chloroplastic (626 aa).

Residues 1 to 45 (MSLISAVPLASSCVSKSLISSVREHTALRRAIATLQMSRRGKSVA) constitute a chloroplast transit peptide. Residues D377, D381, and D529 each contribute to the Mg(2+) site. The short motif at 377–381 (DDMYD) is the DDXXD motif element.

Belongs to the terpene synthase family. Tpsd subfamily. Requires Mg(2+) as cofactor. It depends on Mn(2+) as a cofactor.

It is found in the plastid. It localises to the chloroplast. The enzyme catalyses (2E)-geranyl diphosphate = (+)-car-3-ene + diphosphate. The catalysed reaction is (2E)-geranyl diphosphate = terpinolene + diphosphate. It participates in terpene metabolism; oleoresin biosynthesis. It functions in the pathway secondary metabolite biosynthesis; terpenoid biosynthesis. Its function is as follows. Monoterpene synthase (TPS) involved in the biosynthesis of monoterpene natural products included in conifer oleoresin secretions and volatile emissions; these compounds contribute to biotic and abiotic stress defense against herbivores and pathogens. Catalyzes the conversion of (2E)-geranyl diphosphate (GPP) to (+)-car-3-ene and, to a lower extent, to terpinolene. This chain is (+)-3-carene synthase 1, chloroplastic, found in Pinus contorta (Shore pine).